The primary structure comprises 172 residues: Small ribosomal subunit protein uS5 (172 aa).

The S5 DRBM domain maps to 17–80 (LREKMISVNR…EQARRNMFKV (64 aa)).

It belongs to the universal ribosomal protein uS5 family. Part of the 30S ribosomal subunit. Contacts proteins S4 and S8.

Its function is as follows. With S4 and S12 plays an important role in translational accuracy. In terms of biological role, located at the back of the 30S subunit body where it stabilizes the conformation of the head with respect to the body. This chain is Small ribosomal subunit protein uS5, found in Paraburkholderia xenovorans (strain LB400).